A 281-amino-acid polypeptide reads, in one-letter code: MKRVVVVTGLSGAGKTTAMGFLEDLGYFCVDNVPGSILEELLKLFMSSDLEKMAIAVDVRSEHFSDPVEAIEKIKKKTNALIVFLEASKEELLRRYALTRRRHPLQRNDVGLEEAIEKERQILLPIKEMADFVIDTTKMTSHQLREILGQSLMNQSGGISVRILSFGFKHGIPMDADFIFDARFLPNPHYVPELSHKTGLDREVEEYFKKYSLVDEFVYKIFEVVNVAVKEYQRSGRRIVTVGIGCTGGRHRSVYIAHKIAEMLKKEGFSVVEKHRDLEKV.

Residue 9–16 coordinates ATP; the sequence is GLSGAGKT. 58–61 is a binding site for GTP; sequence DVRS.

Belongs to the RapZ-like family.

In terms of biological role, displays ATPase and GTPase activities. This Thermotoga neapolitana (strain ATCC 49049 / DSM 4359 / NBRC 107923 / NS-E) protein is Nucleotide-binding protein CTN_0898.